A 638-amino-acid polypeptide reads, in one-letter code: Plasma kallikrein (638 aa).

An N-terminal signal peptide occupies residues 1–19 (MILFKQVGYFVSLFATVSC). 4 consecutive Apple domains span residues 21–104 (CLSQ…LKQC), 111–194 (CHQD…LKSC), 201–284 (CPMD…LFTC), and 292–375 (CHFK…LRLC). Disulfide bonds link C21–C104, C47–C77, C51–C57, C111–C194, C137–C166, C141–C147, C201–C284, C227–C256, C231–C237, C292–C375, C318–C347, C322–C328, C340–C345, C383–C503, C419–C435, C517–C584, C548–C563, and C574–C602. N127 carries an N-linked (GlcNAc...) asparagine glycan. N215 carries an N-linked (GlcNAc...) asparagine glycan. An N-linked (GlcNAc...) asparagine glycan is attached at N308. A Peptidase S1 domain is found at 391-626 (IVGGTNSSLG…YIDWILEKIQ (236 aa)). N396 carries an N-linked (GlcNAc...) asparagine glycan. The Charge relay system role is filled by H434. N453 is a glycosylation site (N-linked (GlcNAc...) asparagine). D483 functions as the Charge relay system in the catalytic mechanism. N-linked (GlcNAc...) asparagine glycosylation is present at N494. S578 serves as the catalytic Charge relay system.

The protein belongs to the peptidase S1 family. Plasma kallikrein subfamily. In terms of assembly, forms a heterodimer with SERPINA5. The zymogen is activated by factor XIIa, which cleaves the molecule into a light chain, which contains the active site, and a heavy chain, which associates with HMW kininogen. These chains are linked by one or more disulfide bonds.

The protein resides in the secreted. The enzyme catalyses Cleaves selectively Arg-|-Xaa and Lys-|-Xaa bonds, including Lys-|-Arg and Arg-|-Ser bonds in (human) kininogen to release bradykinin.. Inhibited by SERPINA5. Functionally, the enzyme cleaves Lys-Arg and Arg-Ser bonds. It activates, in a reciprocal reaction, factor XII after its binding to a negatively charged surface. It also releases bradykinin from HMW kininogen and may also play a role in the renin-angiotensin system by converting prorenin into renin. The protein is Plasma kallikrein (Klkb1) of Rattus norvegicus (Rat).